A 636-amino-acid chain; its full sequence is Probable potassium transport system protein Kup (636 aa).

12 helical membrane passes run 22–42, 64–84, 115–135, 150–170, 182–202, 220–240, 261–281, 293–313, 351–371, 383–403, 408–428, and 433–453; these read VGLL…SPLY, ILSL…VMFI, LMVI…MITP, FDGI…ALFL, LFGP…VHGI, FFVV…LALT, WFIL…ALLL, LLAP…ATVI, IYIG…VIGF, VAVT…MLLL, PLLA…FFAA, and IVQG…LMST.

This sequence belongs to the HAK/KUP transporter (TC 2.A.72) family.

The protein resides in the cell inner membrane. The enzyme catalyses K(+)(in) + H(+)(in) = K(+)(out) + H(+)(out). Its function is as follows. Transport of potassium into the cell. Likely operates as a K(+):H(+) symporter. The sequence is that of Probable potassium transport system protein Kup from Pseudomonas putida (strain ATCC 700007 / DSM 6899 / JCM 31910 / BCRC 17059 / LMG 24140 / F1).